A 734-amino-acid chain; its full sequence is Photosystem I P700 chlorophyll a apoprotein A2 (734 aa).

Transmembrane regions (helical) follow at residues 46–69, 135–158, 175–199, 273–291, 330–353, 369–395, 417–439, and 517–535; these read IFAS…FHVA, LYTG…LHLQ, LNHH…HVAI, MAHH…GHMY, LHFQ…QHMY, AALY…IFFL, AIIS…LYVH, and FLVH…LILV. 2 residues coordinate [4Fe-4S] cluster: C559 and C568. The next 2 membrane-spanning stretches (helical) occupy residues 575–596 and 643–665; these read AFYL…YWHW and LSVW…MFLI. The chlorophyll a site is built by H654, M662, and Y670. W671 is a phylloquinone binding site. A helical membrane pass occupies residues 707–727; that stretch reads LVGLAHFSVGYIFTYAAFLIA.

Belongs to the PsaA/PsaB family. As to quaternary structure, the PsaA/B heterodimer binds the P700 chlorophyll special pair and subsequent electron acceptors. PSI consists of a core antenna complex that captures photons, and an electron transfer chain that converts photonic excitation into a charge separation. The eukaryotic PSI reaction center is composed of at least 11 subunits. It depends on P700 is a chlorophyll a/chlorophyll a' dimer, A0 is one or more chlorophyll a, A1 is one or both phylloquinones and FX is a shared 4Fe-4S iron-sulfur center. as a cofactor.

Its subcellular location is the plastid. The protein resides in the chloroplast thylakoid membrane. It carries out the reaction reduced [plastocyanin] + hnu + oxidized [2Fe-2S]-[ferredoxin] = oxidized [plastocyanin] + reduced [2Fe-2S]-[ferredoxin]. In terms of biological role, psaA and PsaB bind P700, the primary electron donor of photosystem I (PSI), as well as the electron acceptors A0, A1 and FX. PSI is a plastocyanin-ferredoxin oxidoreductase, converting photonic excitation into a charge separation, which transfers an electron from the donor P700 chlorophyll pair to the spectroscopically characterized acceptors A0, A1, FX, FA and FB in turn. Oxidized P700 is reduced on the lumenal side of the thylakoid membrane by plastocyanin. The protein is Photosystem I P700 chlorophyll a apoprotein A2 of Adiantum capillus-veneris (Maidenhair fern).